The sequence spans 335 residues: MSFLPFDQQKPLDFIAVGRLCIDLNANEIHRPMEETMTFTKYVGGSPANIAIGMARLGMKTGFIGRVADDQMGRFIVRYLKNNGIDTSHVITDKSGSVTGLAFTEIKSPTDCSILMYRDNVADLKLEPNDIDEDYIRRAKCLLISGTALAKSPSREAVFLALDYARRHGTVVVFDLDYRPYTWQSKEETAIYYNLAAEKCDVIIGTREEFDMMERFDGQRRDDEQTARKWFDYNAKIVVIKHGKDGSIAYTKTGETFVGTIFPANIVKTFGAGDSYAAGFIYGLMNDWPIPKAMEYGAAAASIVISSHSCSDAMPTLAQIEQFIEQHRNGSAARK.

This sequence belongs to the carbohydrate kinase PfkB family.

It carries out the reaction 5-dehydro-2-deoxy-D-gluconate + ATP = 6-phospho-5-dehydro-2-deoxy-D-gluconate + ADP + H(+). It functions in the pathway polyol metabolism; myo-inositol degradation into acetyl-CoA; acetyl-CoA from myo-inositol: step 5/7. In terms of biological role, catalyzes the phosphorylation of 5-dehydro-2-deoxy-D-gluconate (2-deoxy-5-keto-D-gluconate or DKG) to 6-phospho-5-dehydro-2-deoxy-D-gluconate (DKGP). The polypeptide is 5-dehydro-2-deoxygluconokinase (Geobacillus kaustophilus (strain HTA426)).